The following is a 196-amino-acid chain: Probable malonic semialdehyde reductase RutE (196 aa).

The protein belongs to the nitroreductase family. HadB/RutE subfamily. FMN is required as a cofactor.

It carries out the reaction 3-hydroxypropanoate + NADP(+) = 3-oxopropanoate + NADPH + H(+). Its function is as follows. May reduce toxic product malonic semialdehyde to 3-hydroxypropionic acid, which is excreted. This Enterobacter sp. (strain 638) protein is Probable malonic semialdehyde reductase RutE.